Here is an 893-residue protein sequence, read N- to C-terminus: AP-4 complex accessory subunit RUSC1 (893 aa).

Disordered regions lie at residues 31–223 (ELRE…GKAE), 237–332 (EKTE…KDRS), 339–358 (SPDTELPPTGSLGGSLAPPR), and 366–444 (LRSR…RAHA). Over residues 77–87 (HGSSIENQQDP) the composition is skewed to polar residues. Low complexity-rich tracts occupy residues 95–117 (SPSDPGCSSSLSSCSDLSPDESP) and 149–165 (PSTCSPDSFCCSPDSCS). Positions 177 to 187 (SNCNALTTCQD) are enriched in polar residues. The span at 237–257 (EKTEAGWKTIEDSDSGRKTDE) shows a compositional bias: basic and acidic residues. Composition is skewed to pro residues over residues 373–382 (QPPPVPPRDP) and 390–399 (PPRPPPPPVP). The interval 463 to 598 (MAEAQSGTGQ…FHAFILGLLN (136 aa)) is interaction with TRAF6. The 145-residue stretch at 515 to 659 (DVGHLVLTTL…LTFHLDLLFE (145 aa)) folds into the RUN domain. The segment at 599–665 (TKQLELWFSS…LLFEHHHHLP (67 aa)) is interaction with IKBKG. Disordered regions lie at residues 700–721 (RGTSGESTTDSSTPSARPPAGS) and 751–772 (HGTTAEAAQEAPPPTEQTTPGR). 2 stretches are compositionally biased toward low complexity: residues 702 to 714 (TSGESTTDSSTPS) and 754 to 770 (TAEAAQEAPPPTEQTTP). The region spanning 835–893 (QADRAVRALCDHTAAGPDQLSFQRGELLRVIATVDEDWLRCGRDGVEGLVPVGYTSLVL) is the SH3 domain.

As to quaternary structure, associated component of the adapter-like complex 4 (AP-4). Interacts with IKBKG and TRAF6. Interacts with F-actin, acetylated actin, TUBB3, STX1A, KIF5B and KLC1. In terms of processing, phosphorylated on serine residues following nuclear translocation. Post-translationally, polyubiquitinated; polyubiquitination involves TRAF6. In terms of tissue distribution, expressed in brain, brain stem and spinal cord (at protein level).

The protein localises to the cytoplasm. The protein resides in the nucleus. Its subcellular location is the cytoskeleton. It localises to the cytoplasmic vesicle. It is found in the early endosome. The protein localises to the postsynaptic density. The protein resides in the golgi apparatus. Its function is as follows. Associates with the adapter-like complex 4 (AP-4) and may therefore play a role in vesicular trafficking of proteins at the trans-Golgi network. Signaling adapter which plays a role in neuronal differentiation. Involved in regulation of NGF-dependent neurite outgrowth. May play a role in neuronal vesicular trafficking, specifically involving pre-synaptic membrane proteins. Seems to be involved in signaling pathways that are regulated by the prolonged activation of MAPK. Can regulate the polyubiquitination of IKBKG and thus may be involved in regulation of the NF-kappa-B pathway. In Mus musculus (Mouse), this protein is AP-4 complex accessory subunit RUSC1.